Here is a 226-residue protein sequence, read N- to C-terminus: ATP-dependent dethiobiotin synthetase BioD (226 aa).

12–17 (GVGKTV) contacts ATP. T16 is a binding site for Mg(2+). Residue K37 is part of the active site. T41 contacts substrate. Residues D49, 108–111 (EGAG), 169–170 (GS), and 197–199 (PAG) each bind ATP. 2 residues coordinate Mg(2+): D49 and E108.

It belongs to the dethiobiotin synthetase family. In terms of assembly, homodimer. Mg(2+) is required as a cofactor.

The protein resides in the cytoplasm. It carries out the reaction (7R,8S)-7,8-diammoniononanoate + CO2 + ATP = (4R,5S)-dethiobiotin + ADP + phosphate + 3 H(+). It participates in cofactor biosynthesis; biotin biosynthesis; biotin from 7,8-diaminononanoate: step 1/2. In terms of biological role, catalyzes a mechanistically unusual reaction, the ATP-dependent insertion of CO2 between the N7 and N8 nitrogen atoms of 7,8-diaminopelargonic acid (DAPA, also called 7,8-diammoniononanoate) to form a ureido ring. The sequence is that of ATP-dependent dethiobiotin synthetase BioD from Mycobacterium tuberculosis (strain ATCC 25177 / H37Ra).